Here is a 130-residue protein sequence, read N- to C-terminus: Small ribosomal subunit protein bS16 (130 aa).

Basic and acidic residues predominate over residues 98–109; that stretch reads AAAKQAAKDAAE. A disordered region spans residues 98–130; that stretch reads AAAKQAAKDAAEAKAAAAAEAEAPAADAEASEG. Over residues 110–130 the composition is skewed to low complexity; sequence AKAAAAAEAEAPAADAEASEG.

This sequence belongs to the bacterial ribosomal protein bS16 family.

This chain is Small ribosomal subunit protein bS16, found in Synechococcus sp. (strain CC9902).